A 1106-amino-acid polypeptide reads, in one-letter code: Exportin-T (1106 aa).

The tract at residues 336 to 357 (TPLESRTRTGPSAQNGQSDTSD) is disordered. Positions 343-357 (RTGPSAQNGQSDTSD) are enriched in polar residues.

It belongs to the exportin family.

It localises to the nucleus. The protein resides in the cytoplasm. Its function is as follows. tRNA nucleus export receptor which facilitates tRNA translocation across the nuclear pore complex. Involved in pre-tRNA splicing, probably by affecting the interaction of pre-tRNA with splicing endonuclease. The chain is Exportin-T (LOS1) from Mycosarcoma maydis (Corn smut fungus).